Consider the following 96-residue polypeptide: Aspartyl/glutamyl-tRNA(Asn/Gln) amidotransferase subunit C (96 aa).

It belongs to the GatC family. In terms of assembly, heterotrimer of A, B and C subunits.

The enzyme catalyses L-glutamyl-tRNA(Gln) + L-glutamine + ATP + H2O = L-glutaminyl-tRNA(Gln) + L-glutamate + ADP + phosphate + H(+). It catalyses the reaction L-aspartyl-tRNA(Asn) + L-glutamine + ATP + H2O = L-asparaginyl-tRNA(Asn) + L-glutamate + ADP + phosphate + 2 H(+). Allows the formation of correctly charged Asn-tRNA(Asn) or Gln-tRNA(Gln) through the transamidation of misacylated Asp-tRNA(Asn) or Glu-tRNA(Gln) in organisms which lack either or both of asparaginyl-tRNA or glutaminyl-tRNA synthetases. The reaction takes place in the presence of glutamine and ATP through an activated phospho-Asp-tRNA(Asn) or phospho-Glu-tRNA(Gln). This Acaryochloris marina (strain MBIC 11017) protein is Aspartyl/glutamyl-tRNA(Asn/Gln) amidotransferase subunit C.